The sequence spans 188 residues: Ribosome maturation factor RimM (188 aa).

Residues 96–169 (DDEFYYADLE…RILIDPMAAG (74 aa)) form the PRC barrel domain.

It belongs to the RimM family. As to quaternary structure, binds ribosomal protein uS19.

It localises to the cytoplasm. An accessory protein needed during the final step in the assembly of 30S ribosomal subunit, possibly for assembly of the head region. Essential for efficient processing of 16S rRNA. May be needed both before and after RbfA during the maturation of 16S rRNA. It has affinity for free ribosomal 30S subunits but not for 70S ribosomes. The chain is Ribosome maturation factor RimM from Agrobacterium fabrum (strain C58 / ATCC 33970) (Agrobacterium tumefaciens (strain C58)).